The primary structure comprises 443 residues: Tol-Pal system protein TolB (443 aa).

The signal sequence occupies residues 1-31; that stretch reads MTRLAKGKWRSTLGAMMALAVMVAAIPQARA. Residues 423–432 are compositionally biased toward polar residues; that stretch reads NERQISTPTE. A disordered region spans residues 423 to 443; it reads NERQISTPTEASDPAWSPLLP.

Belongs to the TolB family. The Tol-Pal system is composed of five core proteins: the inner membrane proteins TolA, TolQ and TolR, the periplasmic protein TolB and the outer membrane protein Pal. They form a network linking the inner and outer membranes and the peptidoglycan layer.

Its subcellular location is the periplasm. In terms of biological role, part of the Tol-Pal system, which plays a role in outer membrane invagination during cell division and is important for maintaining outer membrane integrity. This Rhodospirillum rubrum (strain ATCC 11170 / ATH 1.1.1 / DSM 467 / LMG 4362 / NCIMB 8255 / S1) protein is Tol-Pal system protein TolB.